The following is a 111-amino-acid chain: 2Fe-2S ferredoxin (111 aa).

A 2Fe-2S ferredoxin-type domain is found at 1-104 (MPKIFFLPHK…DIEVQIPLYN (104 aa)). Residues Cys-42, Cys-48, Cys-51, and Cys-87 each contribute to the [2Fe-2S] cluster site.

It belongs to the adrenodoxin/putidaredoxin family. [2Fe-2S] cluster serves as cofactor.

Ferredoxin are iron-sulfur proteins that transfer electrons in a wide variety of metabolic reactions. This chain is 2Fe-2S ferredoxin (fdx), found in Buchnera aphidicola subsp. Schizaphis graminum (strain Sg).